The sequence spans 79 residues: Acyl carrier protein (79 aa).

Residues 2 to 77 form the Carrier domain; sequence ADHASKIKDI…DAVAYLEAKV (76 aa). Position 37 is an O-(pantetheine 4'-phosphoryl)serine (S37).

It belongs to the acyl carrier protein (ACP) family. 4'-phosphopantetheine is transferred from CoA to a specific serine of apo-ACP by AcpS. This modification is essential for activity because fatty acids are bound in thioester linkage to the sulfhydryl of the prosthetic group.

The protein resides in the cytoplasm. The protein operates within lipid metabolism; fatty acid biosynthesis. Carrier of the growing fatty acid chain in fatty acid biosynthesis. The chain is Acyl carrier protein from Gemmatimonas aurantiaca (strain DSM 14586 / JCM 11422 / NBRC 100505 / T-27).